A 335-amino-acid polypeptide reads, in one-letter code: Acetyl-coenzyme A carboxylase carboxyl transferase subunit alpha (335 aa).

Residues 40-294 (QLETLATRRR…KASIERHLSE (255 aa)) form the CoA carboxyltransferase C-terminal domain.

This sequence belongs to the AccA family. As to quaternary structure, acetyl-CoA carboxylase is a heterohexamer composed of biotin carboxyl carrier protein (AccB), biotin carboxylase (AccC) and two subunits each of ACCase subunit alpha (AccA) and ACCase subunit beta (AccD).

Its subcellular location is the cytoplasm. The catalysed reaction is N(6)-carboxybiotinyl-L-lysyl-[protein] + acetyl-CoA = N(6)-biotinyl-L-lysyl-[protein] + malonyl-CoA. The protein operates within lipid metabolism; malonyl-CoA biosynthesis; malonyl-CoA from acetyl-CoA: step 1/1. Functionally, component of the acetyl coenzyme A carboxylase (ACC) complex. First, biotin carboxylase catalyzes the carboxylation of biotin on its carrier protein (BCCP) and then the CO(2) group is transferred by the carboxyltransferase to acetyl-CoA to form malonyl-CoA. The sequence is that of Acetyl-coenzyme A carboxylase carboxyl transferase subunit alpha from Prochlorococcus marinus (strain MIT 9515).